Here is a 255-residue protein sequence, read N- to C-terminus: Triosephosphate isomerase (255 aa).

Position 9 to 11 (9 to 11 (NWK)) interacts with substrate. Histidine 100 (electrophile) is an active-site residue. Glutamate 169 functions as the Proton acceptor in the catalytic mechanism. Substrate is bound by residues glycine 175, serine 208, and 229–230 (GG).

Belongs to the triosephosphate isomerase family. In terms of assembly, homodimer.

It is found in the cytoplasm. The enzyme catalyses D-glyceraldehyde 3-phosphate = dihydroxyacetone phosphate. It participates in carbohydrate biosynthesis; gluconeogenesis. The protein operates within carbohydrate degradation; glycolysis; D-glyceraldehyde 3-phosphate from glycerone phosphate: step 1/1. Functionally, involved in the gluconeogenesis. Catalyzes stereospecifically the conversion of dihydroxyacetone phosphate (DHAP) to D-glyceraldehyde-3-phosphate (G3P). The chain is Triosephosphate isomerase from Synechococcus sp. (strain JA-3-3Ab) (Cyanobacteria bacterium Yellowstone A-Prime).